Here is a 118-residue protein sequence, read N- to C-terminus: Sporulation protein YjcA (118 aa).

3 consecutive transmembrane segments (helical) span residues 8–28, 62–82, and 92–112; these read IVLL…DTIM, FIGE…GFLI, and AQWL…ETLV.

It belongs to the UPF0713 family.

It is found in the cell membrane. In terms of biological role, involved in sporulation. In Bacillus subtilis (strain 168), this protein is Sporulation protein YjcA (yjcA).